Here is a 245-residue protein sequence, read N- to C-terminus: MAASGSRHPPISDDATSFAAQRERMVAQQISARGVRDPLVLAAMRQVPREAFLPERMRDLAYDDSPLPIGHGQTISQPYIVAAMIEALQLNGGERVLEIGAGSGYAAAVLAQIAGEVTTIERIGALADKAAAALAALGIGNVQVRQGDGSRGWPPGAPYDAIVVAAGGPHLPQSLKTQLAIGGRLVMPVGADQSAQRLVRLTRTSVDDVRCEQLADVRFVPLIGDEGWASVAPEPRADRPATVRK.

The active site involves Ser76.

Belongs to the methyltransferase superfamily. L-isoaspartyl/D-aspartyl protein methyltransferase family.

It localises to the cytoplasm. It carries out the reaction [protein]-L-isoaspartate + S-adenosyl-L-methionine = [protein]-L-isoaspartate alpha-methyl ester + S-adenosyl-L-homocysteine. In terms of biological role, catalyzes the methyl esterification of L-isoaspartyl residues in peptides and proteins that result from spontaneous decomposition of normal L-aspartyl and L-asparaginyl residues. It plays a role in the repair and/or degradation of damaged proteins. The sequence is that of Protein-L-isoaspartate O-methyltransferase 1 from Rhodopseudomonas palustris (strain HaA2).